Reading from the N-terminus, the 686-residue chain is Translation initiation factor IF-2 (686 aa).

A disordered region spans residues 54-105 (KPSVADEFEVEEKVVRSKKNSNKKKKKGKGNEDKRQENFAGRQQTQTVETPD). The span at 69–81 (RSKKNSNKKKKKG) shows a compositional bias: basic residues. A tr-type G domain is found at 188–357 (ERPAVVTIMG…LLISEVEEYK (170 aa)). A G1 region spans residues 197–204 (GHVDHGKT). Position 197-204 (197-204 (GHVDHGKT)) interacts with GTP. The interval 222–226 (GITQH) is G2. Residues 243–246 (DTPG) form a G3 region. Residues 243–247 (DTPGH) and 297–300 (NKMD) each bind GTP. Positions 297 to 300 (NKMD) are G4. The interval 333 to 335 (SAI) is G5.

It belongs to the TRAFAC class translation factor GTPase superfamily. Classic translation factor GTPase family. IF-2 subfamily.

The protein resides in the cytoplasm. Functionally, one of the essential components for the initiation of protein synthesis. Protects formylmethionyl-tRNA from spontaneous hydrolysis and promotes its binding to the 30S ribosomal subunits. Also involved in the hydrolysis of GTP during the formation of the 70S ribosomal complex. The protein is Translation initiation factor IF-2 of Bacillus anthracis (strain A0248).